The chain runs to 101 residues: RNA-binding protein Hfq (101 aa).

The region spanning 9–68 is the Sm domain; it reads DPFLNALRRERVPVSIYLVNGIKLQGQVESFDQFVILLKNTVSQMVYKHAISTVVPSRPV. A disordered region spans residues 63 to 101; it reads VPSRPVSHHSNNPSGSTNNYHGSNPSAPQQPQQDSDDAE. A compositionally biased stretch (polar residues) spans 70–86; it reads HHSNNPSGSTNNYHGSN.

This sequence belongs to the Hfq family. Homohexamer.

RNA chaperone that binds small regulatory RNA (sRNAs) and mRNAs to facilitate mRNA translational regulation in response to envelope stress, environmental stress and changes in metabolite concentrations. Also binds with high specificity to tRNAs. Positively regulates the expression of the yst gene for heat-stable enterotoxin (Y-ST). The sequence is that of RNA-binding protein Hfq from Yersinia enterocolitica.